The primary structure comprises 1282 residues: Clustered mitochondria protein homolog (1282 aa).

The segment at 1-43 (MEQNNGTTEHPKEVLDQTNPSNEVTGVPNGNHAEGEGDQNAGE) is disordered. Residues 341-585 (DITRPQENYL…RITPLDVLWY (245 aa)) enclose the Clu domain. Basic and acidic residues-rich tracts occupy residues 631–641 (EAEEKAEESKP) and 653–669 (ESEKKETTSPDQERVDI). 2 disordered regions span residues 631 to 669 (EAEEKAEESKPNGEAADASENAESEKKETTSPDQERVDI) and 892 to 936 (RSQL…PAPA). Residues 924–936 (QASPRPAQSPAPA) show a composition bias toward low complexity. The TPR repeat unit spans residues 1003–1036 (AKLYHQLSMLYYQSDDKDAAVELARKAVIVTERT). Residues 1202–1282 (ANLPTRLGTK…SKQSTVKPSS (81 aa)) are disordered. Residues 1212–1223 (PQPQVGQTTSEM) show a composition bias toward polar residues. A compositionally biased stretch (basic residues) spans 1257–1272 (TKQKKRAAARNPKLRG). Over residues 1273 to 1282 (SKQSTVKPSS) the composition is skewed to polar residues.

It belongs to the CLU family. May associate with the eukaryotic translation initiation factor 3 (eIF-3) complex.

It localises to the cytoplasm. Its function is as follows. mRNA-binding protein involved in proper cytoplasmic distribution of mitochondria. This Coccidioides immitis (strain RS) (Valley fever fungus) protein is Clustered mitochondria protein homolog.